Here is a 524-residue protein sequence, read N- to C-terminus: Beta-glucosidase 22 (524 aa).

Positions 1–24 (MALQKFPLLGLLFLITIVVSSTIA) are cleaved as a signal peptide. Gln55 provides a ligand contact to a beta-D-glucoside. A glycan (N-linked (GlcNAc...) asparagine) is linked at Asn61. A beta-D-glucoside-binding positions include His158 and 203 to 204 (NE). Glu204 functions as the Proton donor in the catalytic mechanism. Cys223 and Cys230 are oxidised to a cystine. A beta-D-glucoside contacts are provided by residues Tyr346, Glu418, Trp468, 475 to 476 (EW), and Phe484. Glu418 (nucleophile) is an active-site residue. Asn494 is a glycosylation site (N-linked (GlcNAc...) asparagine). The short motif at 521-524 (KDEL) is the Prevents secretion from ER element.

Belongs to the glycosyl hydrolase 1 family. Component of the PYK10 complex, at least composed of PYK10/BGLU23, BGLU21, BGLU22, JAL22, JAL23, PBP1/JAL30, PBP2/JAL31, JAL32, JAL33, JAL34, JAL35, GLL22 and GLL23. In terms of tissue distribution, expressed exclusively in roots.

Its subcellular location is the endoplasmic reticulum lumen. It catalyses the reaction Hydrolysis of terminal, non-reducing beta-D-glucosyl residues with release of beta-D-glucose.. With respect to regulation, activated upon binding to PBP1 or PBP2. Beta-D-glucosidase active on scopolin &gt;&gt; esculin &gt;&gt; 4-MU-glucoside. No activity with DIMBOA-glucoside, pNP-glucoside, oNP-glucoside and sinigrin as substrates. This Arabidopsis thaliana (Mouse-ear cress) protein is Beta-glucosidase 22.